Here is a 148-residue protein sequence, read N- to C-terminus: Large ribosomal subunit protein bL9 (148 aa).

Belongs to the bacterial ribosomal protein bL9 family.

Binds to the 23S rRNA. In Chloroflexus aurantiacus (strain ATCC 29366 / DSM 635 / J-10-fl), this protein is Large ribosomal subunit protein bL9.